The sequence spans 240 residues: Type II restriction enzyme DdeI (240 aa).

It catalyses the reaction Endonucleolytic cleavage of DNA to give specific double-stranded fragments with terminal 5'-phosphates.. Functionally, a P subtype restriction enzyme that recognizes the double-stranded sequence 5'-CTNAG-3' and cleaves after C-1. The chain is Type II restriction enzyme DdeI (ddeIR) from Desulfomicrobium norvegicum (strain DSM 1741 / NCIMB 8310) (Desulfovibrio baculatus (strain Norway 4)).